A 370-amino-acid polypeptide reads, in one-letter code: Prolactin-releasing peptide receptor (370 aa).

Residues 1–34 (MTSLPPGTTGDPDLFSGPSPAGSTPANQSAEASE) form a disordered region. The Extracellular portion of the chain corresponds to 1–62 (MTSLPPGTTG…LQLVHQLKGL (62 aa)). The segment covering 21–34 (AGSTPANQSAEASE) has biased composition (polar residues). N-linked (GlcNAc...) asparagine glycosylation is found at asparagine 27 and asparagine 36. The chain crosses the membrane as a helical span at residues 63–83 (IVMLYSIVVVVGLVGNCLLVL). Residues 84 to 101 (VIARVRRLHNVTNFLIGN) are Cytoplasmic-facing. Residues 102–122 (LALSDVLMCAACVPLTLAYAF) form a helical membrane-spanning segment. Over 123–126 (EPRG) the chain is Extracellular. The chain crosses the membrane as a helical span at residues 127–147 (WVFGGGLCHLVFFLQPVTVYV). A disulfide bond links cysteine 134 and cysteine 211. The Cytoplasmic portion of the chain corresponds to 148-175 (SVFTLTTIAVDRYVVLVHPLRRRISLKL). The chain crosses the membrane as a helical span at residues 176–196 (SAYAVLGIWALSAVLALPAAV). Residues 197-223 (HTYHVELKPHDVRLCEEFWGSQERQRQ) lie on the Extracellular side of the membrane. A helical transmembrane segment spans residues 224–244 (IYAWGLLLGTYLLPLLAILLS). Over 245–276 (YVRVSVKLRNRVVPGSVTQSQADWDRARRRRT) the chain is Cytoplasmic. Residues 277-297 (FCLLVVVVVVFALCWLPLHIF) form a helical membrane-spanning segment. The Extracellular portion of the chain corresponds to 298–317 (NLLRDLDPRAIDPYAFGLVQ). The chain crosses the membrane as a helical span at residues 318-338 (LLCHWLAMSSACYNPFIYAWL). Residues 339–370 (HDSFREELRKMLLSWPRKIVPHGQNMTVSVVI) lie on the Cytoplasmic side of the membrane. The tract at residues 365 to 370 (TVSVVI) is required for interaction with GRIP1, GRIP2 and PICK1.

This sequence belongs to the G-protein coupled receptor 1 family. As to quaternary structure, interacts through its C-terminal region with the PDZ domain-containing proteins GRIP1, GRIP2 and PICK1. Interacts with PDZ domains 4 and 5 of GRIP1 and with the PDZ domain of PICK1. As to expression, widely expressed, with highest levels in pituitary, cerebellum, and hypothalamus.

It is found in the cell membrane. Receptor for prolactin-releasing peptide (PrRP). Implicated in lactation, regulation of food intake and pain-signal processing. The polypeptide is Prolactin-releasing peptide receptor (Prlhr) (Rattus norvegicus (Rat)).